Consider the following 719-residue polypeptide: ATP-dependent RNA helicase SUV3 homolog, mitochondrial (719 aa).

Residues 1–18 constitute a mitochondrion transit peptide; it reads MRRASGVLRVLGGLTQRC. The disordered stretch occupies residues 16 to 42; it reads QRCSTSSTPSSSRFPAMNSRRKRNSVR. In terms of domain architecture, Helicase ATP-binding spans 181 to 319; sequence EARSVTRKIF…PAAIDIVKKL (139 aa). 194 to 201 serves as a coordination point for ATP; sequence GPTNSGKT. One can recognise a Helicase C-terminal domain in the interval 343–499; sequence KAIESYSNIE…PTYDQIETFS (157 aa). Residues 662-692 form a disordered region; it reads SKAAGSSKSSEGKRENPSKSEREKPNKRSSI. Positions 671-687 are enriched in basic and acidic residues; sequence SEGKRENPSKSEREKPN. The stretch at 693-717 forms a coiled coil; sequence LEALLKRADISEDDLEQLREELNKN.

This sequence belongs to the helicase family. Mg(2+) is required as a cofactor. It depends on Mn(2+) as a cofactor.

It localises to the mitochondrion matrix. The protein resides in the nucleus. The enzyme catalyses ATP + H2O = ADP + phosphate + H(+). In terms of biological role, ATPase and DNA/RNA helicase able to unwind DNA/DNA, DNA/RNA and RNA/RNA duplexes in the 5'-3' direction. In Caenorhabditis elegans, this protein is ATP-dependent RNA helicase SUV3 homolog, mitochondrial.